The following is a 137-amino-acid chain: Small ribosomal subunit protein bS18c (137 aa).

Belongs to the bacterial ribosomal protein bS18 family. As to quaternary structure, part of the 30S ribosomal subunit.

Its subcellular location is the plastid. It localises to the chloroplast. The chain is Small ribosomal subunit protein bS18c (rps18) from Chlamydomonas reinhardtii (Chlamydomonas smithii).